The following is a 221-amino-acid chain: GTP cyclohydrolase III (221 aa).

It belongs to the archaeal-type GTP cyclohydrolase family.

The enzyme catalyses GTP + 3 H2O = 2-amino-5-formylamino-6-(5-phospho-D-ribosylamino)pyrimidin-4(3H)-one + 2 phosphate + 2 H(+). Its function is as follows. Catalyzes the formation of 2-amino-5-formylamino-6-ribofuranosylamino-4(3H)-pyrimidinone ribonucleotide monophosphate and inorganic phosphate from GTP. Also has an independent pyrophosphate phosphohydrolase activity. The chain is GTP cyclohydrolase III from Pyrobaculum calidifontis (strain DSM 21063 / JCM 11548 / VA1).